The following is a 104-amino-acid chain: Large ribosomal subunit protein bL21 (104 aa).

It belongs to the bacterial ribosomal protein bL21 family. As to quaternary structure, part of the 50S ribosomal subunit. Contacts protein L20.

This protein binds to 23S rRNA in the presence of protein L20. The protein is Large ribosomal subunit protein bL21 of Pseudomonas entomophila (strain L48).